A 201-amino-acid polypeptide reads, in one-letter code: Lipoprotein signal peptidase (201 aa).

2 helical membrane passes run 73 to 93 and 97 to 117; these read SNAIFLITNTIIVCYLYYLMI and TIGSFAGYSFVIGGAVGNLID. Active-site residues include D126 and D144. A helical transmembrane segment spans residues 135 to 155; sequence YSFPVFNLADCFIIIGVIILI.

It belongs to the peptidase A8 family.

The protein localises to the cell inner membrane. The enzyme catalyses Release of signal peptides from bacterial membrane prolipoproteins. Hydrolyzes -Xaa-Yaa-Zaa-|-(S,diacylglyceryl)Cys-, in which Xaa is hydrophobic (preferably Leu), and Yaa (Ala or Ser) and Zaa (Gly or Ala) have small, neutral side chains.. It functions in the pathway protein modification; lipoprotein biosynthesis (signal peptide cleavage). Functionally, this protein specifically catalyzes the removal of signal peptides from prolipoproteins. The polypeptide is Lipoprotein signal peptidase (Rickettsia conorii (strain ATCC VR-613 / Malish 7)).